The chain runs to 758 residues: Inhibitor of nuclear factor kappa-B kinase subunit alpha (758 aa).

Residues 15–301 (WVMKERLGTG…LNTDSKQPQC (287 aa)) form the Protein kinase domain. Residues 21 to 29 (LGTGGFGHV) and K44 contribute to the ATP site. D145 serves as the catalytic Proton acceptor. Residues 456 to 477 (LLRFNTNLTRYKNMMFSFSQQL) are leucine-zipper. The interval 741–746 (QDWSWT) is NEMO-binding.

It belongs to the protein kinase superfamily. Ser/Thr protein kinase family. I-kappa-B kinase subfamily. In terms of assembly, directly interacts with ikbkg/nemo.

It is found in the cytoplasm. Its subcellular location is the nucleus. The enzyme catalyses L-seryl-[I-kappa-B protein] + ATP = O-phospho-L-seryl-[I-kappa-B protein] + ADP + H(+). Its activity is regulated as follows. Activated when phosphorylated and inactivated when dephosphorylated. In terms of biological role, phosphorylates inhibitors of NF-kappa-B thus leading to the dissociation of the inhibitor/NF-kappa-B complex and ultimately the degradation of the inhibitor. Phosphorylates 'Ser-10' of histone H3 at NF-kappa-B-regulated promoters during inflammatory responses triggered by cytokines. This chain is Inhibitor of nuclear factor kappa-B kinase subunit alpha (chuk), found in Danio rerio (Zebrafish).